We begin with the raw amino-acid sequence, 395 residues long: Phosphoglycerate kinase (395 aa).

Substrate-binding positions include 21–23 (DLN), Arg-36, 59–62 (HLGR), Arg-113, and Arg-146. Residues Lys-197, Glu-324, and 350-353 (GGDT) each bind ATP.

This sequence belongs to the phosphoglycerate kinase family. As to quaternary structure, monomer.

The protein resides in the cytoplasm. The enzyme catalyses (2R)-3-phosphoglycerate + ATP = (2R)-3-phospho-glyceroyl phosphate + ADP. Its pathway is carbohydrate degradation; glycolysis; pyruvate from D-glyceraldehyde 3-phosphate: step 2/5. The sequence is that of Phosphoglycerate kinase from Acinetobacter baumannii (strain AB307-0294).